The sequence spans 221 residues: MFQQFQASCLVLFFLVGFAQQTLKPQNRKVDCNKGVTGTIYEYGALTLNGEEYIQFKQFAGKHVLFVNVAAYUGLAAQYPELNALQEELKNFGVIVLAFPCNQFGKQEPGTNSEILLGLKYVCPGSGFVPSFQLFEKGDVNGEKEQKVFTFLKNSCPPTSDLLGSSSQLFWEPMKVHDIRWNFEKFLVGPDGVPVMHWFHQAPVSTVKSDILEYLKQFNTH.

A signal peptide spans 1 to 19 (MFQQFQASCLVLFFLVGFA). Residue Sec73 is part of the active site. Position 73 (Sec73) is a non-standard amino acid, selenocysteine.

Belongs to the glutathione peroxidase family. In terms of tissue distribution, expressed in olfactory epithelium and embryos.

The protein localises to the secreted. It carries out the reaction 2 glutathione + H2O2 = glutathione disulfide + 2 H2O. This chain is Glutathione peroxidase 6 (GPX6), found in Homo sapiens (Human).